A 280-amino-acid chain; its full sequence is Shikimate dehydrogenase (NADP(+)) (280 aa).

Shikimate-binding positions include 20–22 (SRS) and Thr-67. The Proton acceptor role is filled by Lys-71. Asp-82 is a binding site for NADP(+). Positions 91 and 106 each coordinate shikimate. NADP(+) is bound by residues 131–135 (GAGGS) and Leu-220. Shikimate is bound at residue Tyr-222. Position 243 (Gly-243) interacts with NADP(+).

It belongs to the shikimate dehydrogenase family. Homodimer.

The catalysed reaction is shikimate + NADP(+) = 3-dehydroshikimate + NADPH + H(+). It functions in the pathway metabolic intermediate biosynthesis; chorismate biosynthesis; chorismate from D-erythrose 4-phosphate and phosphoenolpyruvate: step 4/7. Its function is as follows. Involved in the biosynthesis of the chorismate, which leads to the biosynthesis of aromatic amino acids. Catalyzes the reversible NADPH linked reduction of 3-dehydroshikimate (DHSA) to yield shikimate (SA). In Rhodopseudomonas palustris (strain HaA2), this protein is Shikimate dehydrogenase (NADP(+)).